An 863-amino-acid chain; its full sequence is Potassium/sodium hyperpolarization-activated cyclic nucleotide-gated channel 2 (863 aa).

Positions 1 to 10 are enriched in gly residues; sequence MDARGGGGRP. The tract at residues 1–131 is disordered; the sequence is MDARGGGGRP…AGPAGEPRGS (131 aa). The Cytoplasmic portion of the chain corresponds to 1–188; that stretch reads MDARGGGGRP…PYSDFRFYWD (188 aa). Pro residues predominate over residues 17–47; the sequence is TPAPGPPPPPPPPAPPQPQPPPAPPPNPTTP. The segment covering 106–128 has biased composition (low complexity); the sequence is GAASGPAAAEEAGSEEAGPAGEP. Phosphoserine is present on residues Ser119 and Ser134. Residues 131 to 182 form an involved in subunit assembly region; that stretch reads SQASFLQRQFGALLQPGVNKFSLRMFGSQKAVEREQERVKSAGAWIIHPYSD. A helical transmembrane segment spans residues 189-209; that stretch reads FTMLLFMVGNLIIIPVGITFF. Topologically, residues 210 to 213 are extracellular; it reads KDET. Residues 214–234 traverse the membrane as a helical segment; that stretch reads TAPWIVFNVVSDTFFLMDLVL. The Cytoplasmic portion of the chain corresponds to 235 to 261; it reads NFRTGIVIEDNTEIILDPEKIKKKYLR. A helical membrane pass occupies residues 262 to 282; that stretch reads TWFVVDFVSSIPVDYIFLIVE. The Extracellular portion of the chain corresponds to 283–290; it reads KGIDSEVY. A helical; Voltage-sensor membrane pass occupies residues 291–311; sequence KTARALRIVRFTKILSLLRLL. At 312-342 the chain is on the cytoplasmic side; that stretch reads RLSRLIRYIHQWEEIFHMTYDLASAVMRICN. Residues 343–363 traverse the membrane as a helical segment; the sequence is LISMMLLLCHWDGCLQFLVPM. Residues 364–386 are Extracellular-facing; it reads LQDFPSDCWVSINNMVNHSWSEL. Asn380 carries N-linked (GlcNAc...) asparagine glycosylation. The pore-forming intramembrane region spans 387–408; it reads YSFALFKAMSHMLCIGYGRQAP. The Extracellular portion of the chain corresponds to 409-413; that stretch reads ESMTD. The helical transmembrane segment at 414–434 threads the bilayer; it reads IWLTMLSMIVGATCYAMFIGH. Residues 435 to 863 are Cytoplasmic-facing; that stretch reads ATALIQSLDS…SARSRLSSNL (429 aa). The 3',5'-cyclic AMP site is built by Gly581, Glu582, Cys584, Arg591, Thr592, and Arg632. Phosphoserine; by PKG/PRKG2 is present on Ser641. Ser726 is modified (phosphoserine). Arg728 is modified (omega-N-methylarginine). A disordered region spans residues 730–863; sequence VRRAPPGPLP…SARSRLSSNL (134 aa). Residues 734 to 755 show a composition bias toward pro residues; it reads PPGPLPPAASPGPPAASPPAAP. A phosphoserine mark is found at Ser743, Ser750, and Ser757. Composition is skewed to low complexity over residues 756–765 and 778–834; these read SSPRAPRTSP and PALP…AAPS. A phosphoserine mark is found at Ser840, Ser842, and Ser847.

It belongs to the potassium channel HCN family. As to quaternary structure, homotetramer. The channel is composed of a homo- or heterotetrameric complex of pore-forming subunits. Heterotetramer with HCN1. Forms an obligate 4:4 complex with accessory subunit PEX5L. Interacts with KCNE2. Phosphorylation at Ser-641 by PRKG2 shifts the voltage-dependence to more negative voltages, hence counteracting the stimulatory effect of cGMP on gating. Post-translationally, N-glycosylated; required for cell surface trafficking of HCN2. In terms of processing, S-palmitoylated. In terms of tissue distribution, highly expressed in neonatal and adult ventricle and in brain. Highly expressed in the pyramidal layer in hippocampus, in anterior dorsal nucleus in thalamus, in the mammillary nucleus in hypothalamus, in red nucleus, in trigeminal mesencephalic, spinal and principal nuclei, in cochlear and trapezoid nuclei and in the dorsal tegemental nucleus.

The protein resides in the cell membrane. The catalysed reaction is Na(+)(in) = Na(+)(out). It carries out the reaction K(+)(in) = K(+)(out). The enzyme catalyses NH4(+)(in) = NH4(+)(out). With respect to regulation, activated by cAMP, and at 10-100 times higher concentrations, also by cGMP. cAMP binding causes a conformation change that leads to the assembly of an active tetramer and channel opening. In the absence of cAMP, the C-terminal region is thought to exert a tonic inhibition on the pore when HCN2 is in a non-tetrameric form. Channel activity is modulated by intracellular chloride ions and pH; acidic pH shifts the activation to more negative voltages. Phosphatidylinositol-4,5- bisphosphate (PIP(2)) acts as a ligand that allosterically opens HCN2 by shifting voltage-dependent channel activation toward depolarized potentials. Inhibited by extracellular cesium ions. Functionally, hyperpolarization-activated ion channel exhibiting weak selectivity for potassium over sodium ions. Contributes to the native pacemaker currents in heart (If) and in neurons (Ih). Can also transport ammonium in the distal nephron. Involved in the initiation of neuropathic pain in sensory neurons. Produces a large instantaneous current. The chain is Potassium/sodium hyperpolarization-activated cyclic nucleotide-gated channel 2 (Hcn2) from Rattus norvegicus (Rat).